Here is a 108-residue protein sequence, read N- to C-terminus: DNA-directed RNA polymerase subunit omega (108 aa).

This sequence belongs to the RNA polymerase subunit omega family. The RNAP catalytic core consists of 2 alpha, 1 beta, 1 beta' and 1 omega subunit. When a sigma factor is associated with the core the holoenzyme is formed, which can initiate transcription.

It carries out the reaction RNA(n) + a ribonucleoside 5'-triphosphate = RNA(n+1) + diphosphate. Promotes RNA polymerase assembly. Latches the N- and C-terminal regions of the beta' subunit thereby facilitating its interaction with the beta and alpha subunits. In Mycolicibacterium paratuberculosis (strain ATCC BAA-968 / K-10) (Mycobacterium paratuberculosis), this protein is DNA-directed RNA polymerase subunit omega.